The primary structure comprises 604 residues: Solute carrier family 23 member 1 (604 aa).

The tract at residues 1 to 29 (MKAQEDPGSSKQHECPDSAGTSTRDQQAP) is disordered. The Cytoplasmic portion of the chain corresponds to 1–59 (MKAQEDPGSSKQHECPDSAGTSTRDQQAPLPAEPKFDMLYKIEDVPPWYLCILLGFQHY). A helical transmembrane segment spans residues 60–80 (LTCFSGTIAVPFLLAEALCVG). Topologically, residues 81 to 88 (RDQHMISQ) are extracellular. The helical transmembrane segment at 89-109 (LIGTIFTCVGITTLIQTTVGI) threads the bilayer. Position 110 (Arg110) is a topological domain, cytoplasmic. The chain crosses the membrane as a helical span at residues 111 to 131 (LPLFQASAFAFLVPAKAILAL). Over 132 to 166 (ERWKCPPEEEIYGNWSMPLNTSHIWHPRIREVQGA) the chain is Extracellular. N-linked (GlcNAc...) asparagine glycosylation is found at Asn145 and Asn151. The chain crosses the membrane as a helical span at residues 167–187 (IMVSSVVEVVIGLLGLPGALL). The Cytoplasmic portion of the chain corresponds to 188-214 (SYIGPLTVTPTVSLIGLSVFQAAGDRA). The chain crosses the membrane as a helical span at residues 215-232 (GSHWGISACSILLIVLFS). The Extracellular segment spans residues 233 to 236 (QYLR). The helical intramembrane region spans 237–250 (NLTFLLPVYRWGKG). Topologically, residues 251 to 257 (LTLFRIQ) are extracellular. The helical transmembrane segment at 258–278 (IFKMFPIVLAIMTVWLLCYVL) threads the bilayer. The Cytoplasmic portion of the chain corresponds to 279–319 (TLTDVLPADPTVYGFQARTDARGDIMAISPWIRIPYPCQWG). The helical transmembrane segment at 320–340 (LPTVTVAAVLGMFSATLAGII) threads the bilayer. The Extracellular segment spans residues 341-365 (ESIGDYYACARLAGAPPPPVHAINR). A helical membrane pass occupies residues 366-386 (GIFTEGVCCIIAGLLGTGNGS). At 387–409 (TSSSPNIGVLGITKVGSRRVVQY) the chain is on the cytoplasmic side. Residues 410–430 (GAGIMLILGAIGKFTALFASL) form a helical membrane-spanning segment. Residues 431 to 433 (PDP) are Extracellular-facing. Residues 434-454 (ILGGMFCTLFGMITAVGLSNL) form a helical membrane-spanning segment. Topologically, residues 455–464 (QFVDMNSSRN) are cytoplasmic. The helical transmembrane segment at 465 to 485 (LFVLGFSMFFGLTLPNYLDSN) threads the bilayer. The Extracellular segment spans residues 486–497 (PGAINTGVPEVD). A helical membrane pass occupies residues 498-518 (QILTVLLTTEMFVGGCLAFIL). Over 519-604 (DNTVPGSPEE…TETGSVCTKV (86 aa)) the chain is Cytoplasmic. Thr597 is modified (phosphothreonine). Ser599 is modified (phosphoserine). A Phosphothreonine modification is found at Thr602.

The protein belongs to the nucleobase:cation symporter-2 (NCS2) (TC 2.A.40) family. In terms of processing, phosphorylated. As to expression, highly expressed in the straight segment of proximal tubules in the kidney, in intestine and liver. Detected in epithelial cells of the bronchiole and epididymis.

It localises to the cell membrane. It catalyses the reaction L-ascorbate(out) + 2 Na(+)(out) = L-ascorbate(in) + 2 Na(+)(in). The catalysed reaction is urate(out) + 2 Na(+)(out) = urate(in) + 2 Na(+)(in). Functionally, sodium/ascorbate cotransporter. Mediates electrogenic uptake of vitamin C, with a stoichiometry of 2 Na(+) for each ascorbate. Has retained some ancestral activity toward nucleobases such as urate, an oxidized purine. Low-affinity high-capacity sodium:urate cotransporter, may regulate serum urate levels by serving as a renal urate re-absorber. The protein is Solute carrier family 23 member 1 (Slc23a1) of Rattus norvegicus (Rat).